The primary structure comprises 43 residues: Protein PsbN (43 aa).

Residues 7–27 traverse the membrane as a helical segment; sequence LIVAIAAVTICITAFAIYTAF.

Belongs to the PsbN family.

The protein resides in the cellular thylakoid membrane. Functionally, may play a role in photosystem I and II biogenesis. This chain is Protein PsbN, found in Synechococcus sp. (strain JA-2-3B'a(2-13)) (Cyanobacteria bacterium Yellowstone B-Prime).